The sequence spans 2479 residues: MPPNINWKEIMKVDPDDLPRQEELADNLLISLSKVEVNELKSEKQENVIHLFRITQSLMKMKAQEVELALEEVEKAGEEQAKFENQLKTKVMKLENELEMAQQSAGGRDTRFLRNEICQLEKQLEQKDRELEDMEKELEKEKKVNEQLALRNEEAENENSKLRRENKRLKKKNEQLCQDIIDYQKQIDSQKETLLSRRGEDSDYRSQLSKKNYELIQYLDEIQTLTEANEKIEVQNQEMRKNLEESVQEMEKMTDEYNRMKAIVHQTDNVIDQLKKENDHYQLQVQELTDLLKSKNEEDDPIMVAVNAKVEEWKLILSSKDDEIIEYQQMLHNLREKLKNAQLDADKSNVMALQQGIQERDSQIKMLTEQVEQYTKEMEKNTCIIEDLKNELQRNKGASTLSQQTHMKIQSTLDILKEKTKEAERTAELAEADAREKDKELVEALKRLKDYESGVYGLEDAVVEIKNCKNQIKIRDREIEILTKEINKLELKISDFLDENEALRERVGLEPKTMIDLTEFRNSKHLKQQQYRAENQILLKEIESLEEERLDLKKKIRQMAQERGKRSATSGLTTEDLNLTENISQGDRISERKLDLLSLKNMSEAQSKNEFLSRELIEKERDLERSRTVIAKFQNKLKELVEENKQLEEGMKEILQAIKEMQKDPDVKGGETSLIIPSLERLVNAIESKNAEGIFDASLHLKAQVDQLTGRNEELRQELRESRKEAINYSQQLAKANLKIDHLEKETSLLRQSEGSNVVFKGIDLPDGIAPSSASIINSQNEYLIHLLQELENKEKKLKNLEDSLEDYNRKFAVIRHQQSLLYKEYLSEKETWKTESKTIKEEKRKLEDQVQQDAIKVKEYNNLLNALQMDSDEMKKILAENSRKITVLQVNEKSLIRQYTTLVELERQLRKENEKQKNELLSMEAEVCEKIGCLQRFKEMAIFKIAALQKVVDNSVSLSELELANKQYNELTAKYRDILQKDNMLVQRTSNLEHLECENISLKEQVESINKELEITKEKLHTIEQAWEQETKLGNESSMDKAKKSITNSDIVSISKKITMLEMKELNERQRAEHCQKMYEHLRTSLKQMEERNFELETKFAELTKINLDAQKVEQMLRDELADSVSKAVSDADRQRILELEKNEMELKVEVSKLREISDIARRQVEILNAQQQSRDKEVESLRMQLLDYQAQSDEKSLIAKLHQHNVSLQLSEATALGKLESITSKLQKMEAYNLRLEQKLDEKEQALYYARLEGRNRAKHLRQTIQSLRRQFSGALPLAQQEKFSKTMIQLQNDKLKIMQEMKNSQQEHRNMENKTLEMELKLKGLEELISTLKDTKGAQKVINWHMKIEELRLQELKLNRELVKDKEEIKYLNNIISEYERTISSLEEEIVQQNKFHEERQMAWDQREVDLERQLDIFDRQQNEILNAAQKFEEATGSIPDPSLPLPNQLEIALRKIKENIRIILETRATCKSLEEKLKEKESALRLAEQNILSRDKVINELRLRLPATAEREKLIAELGRKEMEPKSHHTLKIAHQTIANMQARLNQKEEVLKKYQRLLEKAREEQREIVKKHEEDLHILHHRLELQADSSLNKFKQTAWDLMKQSPTPVPTNKHFIRLAEMEQTVAEQDDSLSSLLVKLKKVSQDLERQREITELKVKEFENIKLQLQENHEDEVKKVKAEVEDLKYLLDQSQKESQCLKSELQAQKEANSRAPTTTMRNLVERLKSQLALKEKQQKALSRALLELRAEMTAAAEERIISATSQKEAHLNVQQIVDRHTRELKTQVEDLNENLLKLKEALKTSKNRENSLTDNLNDLNNELQKKQKAYNKILREKEEIDQENDELKRQIKRLTSGLQGKPLTDNKQSLIEELQRKVKKLENQLEGKVEEVDLKPMKEKNAKEELIRWEEGKKWQAKIEGIRNKLKEKEGEVFTLTKQLNTLKDLFAKADKEKLTLQRKLKTTGMTVDQVLGIRALESEKELEELKKRNLDLENDILYMRAHQALPRDSVVEDLHLQNRYLQEKLHALEKQFSKDTYSKPSISGIESDDHCQREQELQKENLKLSSENIELKFQLEQANKDLPRLKNQVRDLKEMCEFLKKEKAEVQRKLGHVRGSGRSGKTIPELEKTIGLMKKVVEKVQRENEQLKKASGILTSEKMANIEQENEKLKAELEKLKAHLGHQLSMHYESKTKGTEKIIAENERLRKELKKETDAAEKLRIAKNNLEILNEKMTVQLEETGKRLQFAESRGPQLEGADSKSWKSIVVTRMYETKLKELETDIAKKNQSITDLKQLVKEATEREQKVNKYNEDLEQQIKILKHVPEGAETEQGLKRELQVLRLANHQLDKEKAELIHQIEANKDQSGAESTIPDADQLKEKIKDLETQLKMSDLEKQHLKEEIKKLKKELENFDPSFFEEIEDLKYNYKEEVKKNILLEEKVKKLSEQLGVELTSPVAASEEFEDEEESPVNFPIY.

Residues 1–695 (MPPNINWKEI…IESKNAEGIF (695 aa)) form a self-association (with itself or C-terminus) region. 7 coiled-coil regions span residues 59 to 565 (MKMK…ERGK), 598 to 664 (SLKN…MQKD), 697 to 931 (ASLH…VCEK), 958 to 1027 (SLSE…IEQA), 1071 to 1498 (QRAE…ILSR), 1533 to 1584 (HTLK…LHIL), and 1635 to 2452 (DSLS…SEQL). The segment covering 149–163 (ALRNEEAENENSKLR) has biased composition (basic and acidic residues). Residues 149 to 168 (ALRNEEAENENSKLRRENKR) are disordered. The tract at residues 696–896 (DASLHLKAQV…TVLQVNEKSL (201 aa)) is interaction with IQCB1. The self-association (with itself or N-terminus) stretch occupies residues 1966-2479 (TTGMTVDQVL…EESPVNFPIY (514 aa)). The segment at 2458-2479 (SPVAASEEFEDEEESPVNFPIY) is disordered.

In terms of assembly, part of the tectonic-like complex (also named B9 complex). Interacts with ATF4 via its N-terminal region. Associates with the BBSome complex, interacting (via N-terminus) with BBS4. Interacts with IQCB1/NPHP5; IQCB1 and CEP290/NPHP6 are proposed to form a functional NPHP5-6 module localized to the centrosome. Interacts with NPHP4; the interaction likely requires additional interactors. Interacts with ZNF423, FAM161A, CEP162, CEP162, CEP131, TALPID3, CCDC13, CC2D2A, RPGRIP1. Can self-associate (homo- or heteromeric). Interacts with CCP110; required for suppressing cilia formation. Interacts with RPGR. Associates (via C-terminus) with microtubules; association to microtubule is reduced in response to cellular stress, such as ultraviolet light (UV) radiation or heat shock, in a process that requires p38 MAP kinase signaling. Interacts with FAM161A. Interacts with PCM1. Interacts with CCDC66. Interacts with ARMC9 and CSPP1. In terms of processing, ubiquitinated. May undergo monoubiquitination; monoubiquitination is inhibited in response to cellular stress, such as ultraviolet light (UV) radiation or heat shock, but does not cause its displacement from centriolar satellites. Ubiquitous. Expressed strongly in placenta and weakly in brain.

The protein resides in the cytoplasm. Its subcellular location is the cytoskeleton. It is found in the microtubule organizing center. It localises to the centrosome. The protein localises to the centriolar satellite. The protein resides in the nucleus. Its subcellular location is the cell projection. It is found in the cilium. It localises to the cilium basal body. The protein localises to the centriole. The protein resides in the cytoplasmic vesicle. Involved in early and late steps in cilia formation. Its association with CCP110 is required for inhibition of primary cilia formation by CCP110. May play a role in early ciliogenesis in the disappearance of centriolar satellites and in the transition of primary ciliar vesicles (PCVs) to capped ciliary vesicles (CCVs). Required for the centrosomal recruitment of RAB8A and for the targeting of centriole satellite proteins to centrosomes such as of PCM1. Required for the correct localization of ciliary and phototransduction proteins in retinal photoreceptor cells; may play a role in ciliary transport processes. Required for efficient recruitment of RAB8A to primary cilium. In the ciliary transition zone is part of the tectonic-like complex which is required for tissue-specific ciliogenesis and may regulate ciliary membrane composition. Involved in regulation of the BBSome complex integrity, specifically for presence of BBS2, BBS5 and BBS8/TTC8 in the complex, and in ciliary targeting of selected BBSome cargos. May play a role in controlling entry of the BBSome complex to cilia possibly implicating IQCB1/NPHP5. Activates ATF4-mediated transcription. This is Centrosomal protein of 290 kDa (CEP290) from Homo sapiens (Human).